The primary structure comprises 394 residues: Elongation factor Tu-A (394 aa).

One can recognise a tr-type G domain in the interval 10–204 (KPHVNVGTIG…HLDTYIPEPQ (195 aa)). The segment at 19–26 (GHVDHGKT) is G1. 19-26 (GHVDHGKT) contacts GTP. Residue threonine 26 participates in Mg(2+) binding. The interval 60-64 (GITIN) is G2. The interval 81 to 84 (DCPG) is G3. GTP contacts are provided by residues 81-85 (DCPGH) and 136-139 (NKCD). A G4 region spans residues 136–139 (NKCD). The interval 174 to 176 (SAL) is G5.

The protein belongs to the TRAFAC class translation factor GTPase superfamily. Classic translation factor GTPase family. EF-Tu/EF-1A subfamily. Monomer.

It localises to the cytoplasm. The enzyme catalyses GTP + H2O = GDP + phosphate + H(+). GTP hydrolase that promotes the GTP-dependent binding of aminoacyl-tRNA to the A-site of ribosomes during protein biosynthesis. This Pasteurella multocida (strain Pm70) protein is Elongation factor Tu-A.